We begin with the raw amino-acid sequence, 388 residues long: LL-diaminopimelate aminotransferase (388 aa).

Positions 13, 38, 102, 126, and 176 each coordinate substrate. Pyridoxal 5'-phosphate-binding positions include 101–102 (SK), Tyr-126, Asn-176, Tyr-207, and 235–237 (SLS). Lys-238 is subject to N6-(pyridoxal phosphate)lysine. Residue Arg-246 coordinates pyridoxal 5'-phosphate. Arg-364 is a binding site for substrate.

This sequence belongs to the class-I pyridoxal-phosphate-dependent aminotransferase family. LL-diaminopimelate aminotransferase subfamily. In terms of assembly, homodimer. It depends on pyridoxal 5'-phosphate as a cofactor.

The enzyme catalyses (2S,6S)-2,6-diaminopimelate + 2-oxoglutarate = (S)-2,3,4,5-tetrahydrodipicolinate + L-glutamate + H2O + H(+). The protein operates within amino-acid biosynthesis; L-lysine biosynthesis via DAP pathway; LL-2,6-diaminopimelate from (S)-tetrahydrodipicolinate (aminotransferase route): step 1/1. Involved in the synthesis of meso-diaminopimelate (m-DAP or DL-DAP), required for both lysine and peptidoglycan biosynthesis. Catalyzes the direct conversion of tetrahydrodipicolinate to LL-diaminopimelate. This is LL-diaminopimelate aminotransferase from Dehalococcoides mccartyi (strain CBDB1).